Consider the following 414-residue polypeptide: 3-ketoacyl-CoA thiolase, peroxisomal (414 aa).

Residues 1-9 constitute a peroxisome transit peptide; that stretch reads MDRLNNLAT. Residues 1 to 9 form a PTS2-type peroxisomal targeting signal region; that stretch reads MDRLNNLAT. The active-site Acyl-thioester intermediate is the Cys-115. Catalysis depends on proton acceptor residues His-370 and Cys-400.

The protein belongs to the thiolase-like superfamily. Thiolase family. As to quaternary structure, homodimer. Interacts (via PTS2-type peroxisomal targeting signal region) with PEX7; leading to its translocation into peroxisomes.

The protein localises to the peroxisome. It carries out the reaction an acyl-CoA + acetyl-CoA = a 3-oxoacyl-CoA + CoA. Its pathway is lipid metabolism; fatty acid metabolism. Responsible for the thiolytic cleavage of straight chain 3-keto fatty acyl-CoAs (3-oxoacyl-CoAs). The polypeptide is 3-ketoacyl-CoA thiolase, peroxisomal (POT1) (Yarrowia lipolytica (strain CLIB 122 / E 150) (Yeast)).